We begin with the raw amino-acid sequence, 91 residues long: Progonadoliberin-1 (91 aa).

An N-terminal signal peptide occupies residues M1–S23. A Pyrrolidone carboxylic acid modification is found at Q24. G33 bears the Glycine amide mark.

Belongs to the GnRH family. Post-translationally, the precursor is cleaved by ACE, which removes the Gly-Lys-Arg peptide at the C-terminus, leading to mature hormone. The mature form of Gonadoliberin-1 is also cleaved and degraded by ACE.

Its subcellular location is the secreted. Functionally, stimulates the secretion of gonadotropins; it stimulates the secretion of both luteinizing and follicle-stimulating hormones. The chain is Progonadoliberin-1 (GNRH1) from Sus scrofa (Pig).